Consider the following 625-residue polypeptide: Phosphomethylpyrimidine synthase (625 aa).

Residues Asn230, Met259, Tyr288, His324, 344–346, 385–388, and Glu424 each bind substrate; these read SRG and DGLR. His428 contributes to the Zn(2+) binding site. Tyr451 lines the substrate pocket. His492 is a Zn(2+) binding site. Cys572, Cys575, and Cys580 together coordinate [4Fe-4S] cluster.

Belongs to the ThiC family. Homodimer. [4Fe-4S] cluster is required as a cofactor.

The enzyme catalyses 5-amino-1-(5-phospho-beta-D-ribosyl)imidazole + S-adenosyl-L-methionine = 4-amino-2-methyl-5-(phosphooxymethyl)pyrimidine + CO + 5'-deoxyadenosine + formate + L-methionine + 3 H(+). It participates in cofactor biosynthesis; thiamine diphosphate biosynthesis. Catalyzes the synthesis of the hydroxymethylpyrimidine phosphate (HMP-P) moiety of thiamine from aminoimidazole ribotide (AIR) in a radical S-adenosyl-L-methionine (SAM)-dependent reaction. This is Phosphomethylpyrimidine synthase from Xanthomonas campestris pv. campestris (strain 8004).